A 168-amino-acid polypeptide reads, in one-letter code: MHRRAIYPGTFDPVTNGHADLIERAAKLFKHVIIGIAANPSKQPRFTLEERVEQLTLVTAHLDNVEVVGFSGLLVDFARDQKASVLVRGLRAVSDFEYEFQLANMNRRLSPDLESVFLTPAEENSFISSTLVKEVALHGGDVSQFVHPQVALALKEKIAAMKANKGNK.

Residue threonine 10 coordinates substrate. Residues 10–11 (TF) and histidine 18 each bind ATP. Substrate-binding residues include lysine 42, leucine 74, and arginine 88. ATP contacts are provided by residues 89–91 (GLR), glutamate 99, and 124–130 (NSFISST).

It belongs to the bacterial CoaD family. As to quaternary structure, homohexamer. Requires Mg(2+) as cofactor.

The protein localises to the cytoplasm. It carries out the reaction (R)-4'-phosphopantetheine + ATP + H(+) = 3'-dephospho-CoA + diphosphate. Its pathway is cofactor biosynthesis; coenzyme A biosynthesis; CoA from (R)-pantothenate: step 4/5. Its function is as follows. Reversibly transfers an adenylyl group from ATP to 4'-phosphopantetheine, yielding dephospho-CoA (dPCoA) and pyrophosphate. This Shewanella denitrificans (strain OS217 / ATCC BAA-1090 / DSM 15013) protein is Phosphopantetheine adenylyltransferase.